The following is a 309-amino-acid chain: ATP synthase gamma chain (309 aa).

The protein belongs to the ATPase gamma chain family. As to quaternary structure, F-type ATPases have 2 components, CF(1) - the catalytic core - and CF(0) - the membrane proton channel. CF(1) has five subunits: alpha(3), beta(3), gamma(1), delta(1), epsilon(1). CF(0) has three main subunits: a, b and c.

It is found in the cell membrane. Functionally, produces ATP from ADP in the presence of a proton gradient across the membrane. The gamma chain is believed to be important in regulating ATPase activity and the flow of protons through the CF(0) complex. In Mycobacterium sp. (strain JLS), this protein is ATP synthase gamma chain.